Reading from the N-terminus, the 325-residue chain is Taste receptor type 2 member 7 (325 aa).

Over 1 to 9 (MADKVQTTL) the chain is Extracellular. The chain crosses the membrane as a helical span at residues 10–30 (LFLAVGEFSVGILGNAFIGLV). Over 31–55 (NCMDWVKKRKIASIDLILTSLAISR) the chain is Cytoplasmic. The chain crosses the membrane as a helical span at residues 56–76 (ICLLCVILLDCFILVLYPDVY). Topologically, residues 77 to 94 (ATGKEMRIIDFFWTLTNH) are extracellular. The helical transmembrane segment at 95–115 (LSIWFATCLSIYYFFRIANFF) threads the bilayer. Topologically, residues 116–128 (HPLFLWMKWRIDR) are cytoplasmic. The helical transmembrane segment at 129 to 149 (VISWILLGCVVLSVFISLPAT) threads the bilayer. The Extracellular portion of the chain corresponds to 150-187 (ENLNADFRFCVKAKRKTNLTWSCRVNKTQHASTKLFLN). Residues asparagine 167 and asparagine 175 are each glycosylated (N-linked (GlcNAc...) asparagine). Residues 188 to 208 (LATLLPFCVCLMSFFLLILSL) traverse the membrane as a helical segment. The Cytoplasmic segment spans residues 209-235 (RRHIRRMQLSATGCRDPSTEAHVRALK). The helical transmembrane segment at 236–256 (AVISFLLLFIAYYLSFLVATS) threads the bilayer. Residues 257 to 266 (SYFMPETELA) are Extracellular-facing. Residues 267 to 287 (VIFGESIALIYPSSHSFILIL) traverse the membrane as a helical segment. At 288-319 (GNNKLRHASLKVIWKVMSILKGRKFQQHKQIG) the chain is on the cytoplasmic side.

This sequence belongs to the G-protein coupled receptor T2R family.

The protein localises to the membrane. Gustducin-coupled receptor implicated in the perception of bitter compounds in the oral cavity and the gastrointestinal tract. Signals through PLCB2 and the calcium-regulated cation channel TRPM5. The sequence is that of Taste receptor type 2 member 7 (TAS2R7) from Pan paniscus (Pygmy chimpanzee).